Reading from the N-terminus, the 347-residue chain is UDP-3-O-acylglucosamine N-acyltransferase (347 aa).

H248 functions as the Proton acceptor in the catalytic mechanism.

The protein belongs to the transferase hexapeptide repeat family. LpxD subfamily. As to quaternary structure, homotrimer.

The catalysed reaction is a UDP-3-O-[(3R)-3-hydroxyacyl]-alpha-D-glucosamine + a (3R)-hydroxyacyl-[ACP] = a UDP-2-N,3-O-bis[(3R)-3-hydroxyacyl]-alpha-D-glucosamine + holo-[ACP] + H(+). Its pathway is bacterial outer membrane biogenesis; LPS lipid A biosynthesis. Catalyzes the N-acylation of UDP-3-O-acylglucosamine using 3-hydroxyacyl-ACP as the acyl donor. Is involved in the biosynthesis of lipid A, a phosphorylated glycolipid that anchors the lipopolysaccharide to the outer membrane of the cell. This chain is UDP-3-O-acylglucosamine N-acyltransferase, found in Synechococcus sp. (strain CC9902).